The following is a 488-amino-acid chain: Homoserine O-acetyltransferase (488 aa).

The AB hydrolase-1 domain maps to 47-355 (NAILVCHALT…SYGHDAFLLE (309 aa)). S153 (nucleophile) is an active-site residue. R222 contributes to the substrate binding site. Residues D316 and H349 contribute to the active site. Substrate is bound at residue D350. CBS domains are found at residues 376 to 433 (MTEK…CSKL) and 437 to 488 (MTRD…RLIG).

Belongs to the AB hydrolase superfamily. MetX family. As to quaternary structure, homodimer.

The protein localises to the cytoplasm. It catalyses the reaction L-homoserine + acetyl-CoA = O-acetyl-L-homoserine + CoA. Its pathway is amino-acid biosynthesis; L-methionine biosynthesis via de novo pathway; O-acetyl-L-homoserine from L-homoserine: step 1/1. Functionally, transfers an acetyl group from acetyl-CoA to L-homoserine, forming acetyl-L-homoserine. This chain is Homoserine O-acetyltransferase, found in Methanococcoides burtonii (strain DSM 6242 / NBRC 107633 / OCM 468 / ACE-M).